The primary structure comprises 300 residues: Glutamyl-Q tRNA(Asp) synthetase (300 aa).

L-glutamate is bound by residues 14-18 and Glu50; that span reads RFAPT. Residues 17-27 carry the 'HIGH' region motif; the sequence is PTPSGFLHFGS. The Zn(2+) site is built by Cys106, Cys108, Tyr120, and Cys124. Residues Tyr177 and Arg195 each coordinate L-glutamate. The short motif at 233 to 237 is the 'KMSKS' region element; it reads KLGKS. Residue Lys236 participates in ATP binding.

This sequence belongs to the class-I aminoacyl-tRNA synthetase family. GluQ subfamily. The cofactor is Zn(2+).

Functionally, catalyzes the tRNA-independent activation of glutamate in presence of ATP and the subsequent transfer of glutamate onto a tRNA(Asp). Glutamate is transferred on the 2-amino-5-(4,5-dihydroxy-2-cyclopenten-1-yl) moiety of the queuosine in the wobble position of the QUC anticodon. The protein is Glutamyl-Q tRNA(Asp) synthetase of Pseudomonas putida (strain ATCC 700007 / DSM 6899 / JCM 31910 / BCRC 17059 / LMG 24140 / F1).